The following is a 337-amino-acid chain: Sorting nexin-15 (337 aa).

Positions 1-130 (MSRQAKDDFL…EFFRGGEVTR (130 aa)) constitute a PX domain. The a 1,2-diacyl-sn-glycero-3-phospho-(1D-myo-inositol-3-phosphate) site is built by Arg51, Ser53, Arg87, and Arg96. At Arg105 the chain carries Omega-N-methylarginine. Residues 133–156 (EVSRDLRILPPPLIPTPPPDEARL) form a disordered region. The segment covering 141–151 (LPPPLIPTPPP) has biased composition (pro residues). Phosphoserine is present on residues Ser201 and Ser227. Positions 244-270 (LDQEPWEPGGQEEEEAEDGEPAPAYLG) are disordered. Residues 253-263 (GQEEEEAEDGE) are compositionally biased toward acidic residues. Residues 265–337 (APAYLGQATE…RAEMLHTHLP (73 aa)) enclose the MIT domain.

The protein belongs to the sorting nexin family. In terms of assembly, homodimer. Interacts with SNX1, SNX2 and SNX4.

It localises to the cytoplasm. Its subcellular location is the membrane. The protein localises to the cytoplasmic vesicle membrane. In terms of biological role, may be involved in several stages of intracellular trafficking. Overexpression of SNX15 disrupts the normal trafficking of proteins from the plasma membrane to recycling endosomes or the TGN. This is Sorting nexin-15 (Snx15) from Mus musculus (Mouse).